A 500-amino-acid chain; its full sequence is Cytochrome P450 monooxygenase 103 (500 aa).

Transmembrane regions (helical) follow at residues 1–21 (MAST…YLLR) and 26–46 (PLYA…IGAL). N-linked (GlcNAc...) asparagine glycosylation is present at Asn-374. Position 441 (Cys-441) interacts with heme.

Belongs to the cytochrome P450 family. Heme is required as a cofactor.

It localises to the membrane. The protein operates within secondary metabolite biosynthesis. Cytochrome P450 monooxygenase that is able to use testosterone as a substrate for oxidation. This is Cytochrome P450 monooxygenase 103 from Postia placenta (strain ATCC 44394 / Madison 698-R) (Brown rot fungus).